The sequence spans 141 residues: MEVPMDCPGCENKVRKALEKMNGVHDVQIDIKQQRVTVTGSAEQKKVLKVARNVTKRDICLWSYPYHPESNGYNDRYFKKKFRKRINMSVNGEKVSSYNYHKHGYHGHEHGYYQERPYSGLINPSASSMFSEENPHFCSIM.

The region spanning 1–59 (MEVPMDCPGCENKVRKALEKMNGVHDVQIDIKQQRVTVTGSAEQKKVLKVARNVTKRDI) is the HMA domain. A metal cation is bound by residues Cys-7 and Cys-10. At Cys-138 the chain carries Cysteine methyl ester. Cys-138 carries the S-farnesyl cysteine lipid modification. The propeptide at 139 to 141 (SIM) is removed in mature form.

Belongs to the HIPP family.

In terms of biological role, heavy-metal-binding protein. The chain is Heavy metal-associated isoprenylated plant protein 29 from Arabidopsis thaliana (Mouse-ear cress).